A 436-amino-acid polypeptide reads, in one-letter code: ATP-dependent protease ATPase subunit HslU (436 aa).

ATP-binding positions include Ile19, 61-65, Asp249, Glu314, and Arg386; that span reads GVGKT.

It belongs to the ClpX chaperone family. HslU subfamily. As to quaternary structure, a double ring-shaped homohexamer of HslV is capped on each side by a ring-shaped HslU homohexamer. The assembly of the HslU/HslV complex is dependent on binding of ATP.

Its subcellular location is the cytoplasm. In terms of biological role, ATPase subunit of a proteasome-like degradation complex; this subunit has chaperone activity. The binding of ATP and its subsequent hydrolysis by HslU are essential for unfolding of protein substrates subsequently hydrolyzed by HslV. HslU recognizes the N-terminal part of its protein substrates and unfolds these before they are guided to HslV for hydrolysis. The chain is ATP-dependent protease ATPase subunit HslU from Bartonella henselae (strain ATCC 49882 / DSM 28221 / CCUG 30454 / Houston 1) (Rochalimaea henselae).